Reading from the N-terminus, the 370-residue chain is Peptidyl-prolyl cis-trans isomerase D (370 aa).

Residues F11–E176 enclose the PPIase cyclophilin-type domain. 3 TPR repeats span residues V218–Y251, L269–D302, and T307–D340.

It belongs to the cyclophilin-type PPIase family. PPIase D subfamily.

The protein localises to the cytoplasm. It catalyses the reaction [protein]-peptidylproline (omega=180) = [protein]-peptidylproline (omega=0). In terms of biological role, PPIases accelerate the folding of proteins. It catalyzes the cis-trans isomerization of proline imidic peptide bonds in oligopeptides. The sequence is that of Peptidyl-prolyl cis-trans isomerase D (CPR6) from Debaryomyces hansenii (strain ATCC 36239 / CBS 767 / BCRC 21394 / JCM 1990 / NBRC 0083 / IGC 2968) (Yeast).